The primary structure comprises 455 residues: Argininosuccinate lyase (455 aa).

The protein belongs to the lyase 1 family. Argininosuccinate lyase subfamily.

The protein localises to the cytoplasm. It carries out the reaction 2-(N(omega)-L-arginino)succinate = fumarate + L-arginine. It functions in the pathway amino-acid biosynthesis; L-arginine biosynthesis; L-arginine from L-ornithine and carbamoyl phosphate: step 3/3. The chain is Argininosuccinate lyase from Shewanella baltica (strain OS185).